A 473-amino-acid chain; its full sequence is Benzoyl-CoA oxygenase component B (473 aa).

This sequence belongs to the benzoyl-CoA oxygenase component B family. In terms of assembly, monomer. The subunit composition of the active BoxA/BoxB protein complex is not known. It depends on Fe cation as a cofactor.

The catalysed reaction is benzoyl-CoA + NADPH + O2 + H(+) = 2,3-epoxy-2,3-dihydrobenzoyl-CoA + NADP(+) + H2O. Functionally, the BoxA/BoxB complex catalyzes the aerobic reduction/oxygenation of the aromatic ring of benzoyl-CoA to form 2,3-epoxy-2,3-dihydrobenzoyl-CoA. BoxB acts as the benzoyl-CoA oxygenase, after being reduced by the reductase component BoxA. BoxAB does not act on NADH or benzoate. This chain is Benzoyl-CoA oxygenase component B (boxB), found in Aromatoleum evansii (Azoarcus evansii).